Reading from the N-terminus, the 156-residue chain is Ribosomal RNA large subunit methyltransferase H (156 aa).

S-adenosyl-L-methionine is bound by residues L73, G104, and 123 to 128 (LSPLTL).

The protein belongs to the RNA methyltransferase RlmH family. As to quaternary structure, homodimer.

Its subcellular location is the cytoplasm. It carries out the reaction pseudouridine(1915) in 23S rRNA + S-adenosyl-L-methionine = N(3)-methylpseudouridine(1915) in 23S rRNA + S-adenosyl-L-homocysteine + H(+). Specifically methylates the pseudouridine at position 1915 (m3Psi1915) in 23S rRNA. The polypeptide is Ribosomal RNA large subunit methyltransferase H (Hahella chejuensis (strain KCTC 2396)).